The following is a 64-amino-acid chain: Large ribosomal subunit protein bL35 (64 aa).

It belongs to the bacterial ribosomal protein bL35 family.

The sequence is that of Large ribosomal subunit protein bL35 from Streptomyces avermitilis (strain ATCC 31267 / DSM 46492 / JCM 5070 / NBRC 14893 / NCIMB 12804 / NRRL 8165 / MA-4680).